Reading from the N-terminus, the 180-residue chain is Large ribosomal subunit protein uL5 (180 aa).

This sequence belongs to the universal ribosomal protein uL5 family. As to quaternary structure, part of the 50S ribosomal subunit; part of the 5S rRNA/L5/L18/L25 subcomplex. Contacts the 5S rRNA and the P site tRNA. Forms a bridge to the 30S subunit in the 70S ribosome.

This is one of the proteins that bind and probably mediate the attachment of the 5S RNA into the large ribosomal subunit, where it forms part of the central protuberance. In the 70S ribosome it contacts protein S13 of the 30S subunit (bridge B1b), connecting the 2 subunits; this bridge is implicated in subunit movement. Contacts the P site tRNA; the 5S rRNA and some of its associated proteins might help stabilize positioning of ribosome-bound tRNAs. This is Large ribosomal subunit protein uL5 from Streptococcus thermophilus (strain CNRZ 1066).